A 1171-amino-acid chain; its full sequence is ATP-dependent helicase/deoxyribonuclease subunit B (1171 aa).

A UvrD-like helicase ATP-binding domain is found at 1 to 343 (MSLRFVIGRA…LVADENYRYR (343 aa)). 8–15 (GRAGSGKS) is a binding site for ATP. One can recognise a UvrD-like helicase C-terminal domain in the interval 281-587 (MEQPRFHSPA…QFANIPPSLD (307 aa)). The [4Fe-4S] cluster site is built by C805, C1129, C1132, and C1138.

The protein belongs to the helicase family. AddB/RexB type 1 subfamily. As to quaternary structure, heterodimer of AddA and AddB. Mg(2+) is required as a cofactor. Requires [4Fe-4S] cluster as cofactor.

In terms of biological role, the heterodimer acts as both an ATP-dependent DNA helicase and an ATP-dependent, dual-direction single-stranded exonuclease. Recognizes the chi site generating a DNA molecule suitable for the initiation of homologous recombination. The AddB subunit has 5' -&gt; 3' nuclease activity but not helicase activity. The protein is ATP-dependent helicase/deoxyribonuclease subunit B of Bacillus cereus (strain AH187).